The following is a 62-amino-acid chain: Photosystem II reaction center protein Z (62 aa).

2 helical membrane passes run 8-28 and 41-61; these read FLIALVLFSLLMVIGVPVAYA and YVGSAIWAILVVAVAILNFLV.

It belongs to the PsbZ family. In terms of assembly, PSII is composed of 1 copy each of membrane proteins PsbA, PsbB, PsbC, PsbD, PsbE, PsbF, PsbH, PsbI, PsbJ, PsbK, PsbL, PsbM, PsbT, PsbX, PsbY, PsbZ, Psb30/Ycf12, peripheral proteins PsbO, CyanoQ (PsbQ), PsbU, PsbV and a large number of cofactors. It forms dimeric complexes.

It is found in the cellular thylakoid membrane. Functionally, may control the interaction of photosystem II (PSII) cores with the light-harvesting antenna, regulates electron flow through the 2 photosystem reaction centers. PSII is a light-driven water plastoquinone oxidoreductase, using light energy to abstract electrons from H(2)O, generating a proton gradient subsequently used for ATP formation. In Microcystis aeruginosa (strain NIES-843 / IAM M-2473), this protein is Photosystem II reaction center protein Z.